Here is a 587-residue protein sequence, read N- to C-terminus: MQEQKLQENDFSTLQTFKRLWPMIKPFKAGLIVSGVALVFNALADSGLIYLLKPLLDDGFGKANHSFLKMMAFVVVGMIILRGITNFISNYCLAWVSGKVVMTMRRRLFKHLMFMPVSFFDQNSTGRLLSRITYDSQMIASSSSGSLITIVREGAYIISLFAVMFYTSWELTIVLFIIGPIIAVLIRLVSKIFRRLSKNLQDSMGELTSATEQMLKGHKVVLSFGGQHVEEVHFNHVSNDMRRKSMKMVTANSISDPVVQVIASLALATVLYLATTPLIAEDNLSAGSFTVVFSSMLAMMRPLKSLTAVNAQFQSGMAACQTLFAILDLEPEKDDGAYKAEPAKGELEFKNVSFAYQGKDELALNNISFSVPAGKTVALVGRSGSGKSTIANLVTRFYDIEQGEILLDGVNIQDYRLSNLRENCAVVSQQVHLFNDTIANNIAYAAQDKYSREEIIAAAKAAYALEFIEKLPQVFDTVIGENGTSLSGGQRQRLAIARALLRNSPVLILDEATSALDTESERAIQSALEELKKDRTVVVIAHRLSTIENADEILVIDHGEIRERGNHKTLLEQNGAYKQLHSMQFTG.

5 consecutive transmembrane segments (helical) span residues 31–51 (LIVS…LIYL), 68–88 (LKMM…TNFI), 145–165 (GSLI…AVMF), 166–186 (YTSW…AVLI), and 259–279 (VQVI…TPLI). Positions 32 to 315 (IVSGVALVFN…LTAVNAQFQS (284 aa)) constitute an ABC transmembrane type-1 domain. The ABC transporter domain maps to 347-583 (LEFKNVSFAY…NGAYKQLHSM (237 aa)). 381–388 (GRSGSGKS) provides a ligand contact to ATP.

Belongs to the ABC transporter superfamily. Lipid exporter (TC 3.A.1.106) family. In terms of assembly, homodimer.

The protein resides in the cell inner membrane. The enzyme catalyses ATP + H2O + lipid A-core oligosaccharideSide 1 = ADP + phosphate + lipid A-core oligosaccharideSide 2.. Involved in lipopolysaccharide (LPS) biosynthesis. Translocates lipid A-core from the inner to the outer leaflet of the inner membrane. Transmembrane domains (TMD) form a pore in the inner membrane and the ATP-binding domain (NBD) is responsible for energy generation. The chain is ATP-dependent lipid A-core flippase from Haemophilus influenzae (strain ATCC 51907 / DSM 11121 / KW20 / Rd).